Consider the following 151-residue polypeptide: Putative pre-16S rRNA nuclease (151 aa).

It belongs to the YqgF nuclease family.

It localises to the cytoplasm. Its function is as follows. Could be a nuclease involved in processing of the 5'-end of pre-16S rRNA. This chain is Putative pre-16S rRNA nuclease, found in Pelagibacter ubique (strain HTCC1062).